A 484-amino-acid polypeptide reads, in one-letter code: tRNA-2-methylthio-N(6)-dimethylallyladenosine synthase (484 aa).

An MTTase N-terminal domain is found at 36 to 153 (GKLYIKTHGC…LPELIRARRE (118 aa)). Residues Cys-45, Cys-82, Cys-116, Cys-190, Cys-194, and Cys-197 each coordinate [4Fe-4S] cluster. Residues 176-415 (RAEGPSAFVS…HISAHAASIS (240 aa)) enclose the Radical SAM core domain. The TRAM domain maps to 416 to 479 (QSMVGSVQRV…SNSLRGRIQL (64 aa)). Residues 428–450 (EGPSRRDPNELTGKSENMRPVNF) are disordered.

This sequence belongs to the methylthiotransferase family. MiaB subfamily. As to quaternary structure, monomer. The cofactor is [4Fe-4S] cluster.

It is found in the cytoplasm. The catalysed reaction is N(6)-dimethylallyladenosine(37) in tRNA + (sulfur carrier)-SH + AH2 + 2 S-adenosyl-L-methionine = 2-methylsulfanyl-N(6)-dimethylallyladenosine(37) in tRNA + (sulfur carrier)-H + 5'-deoxyadenosine + L-methionine + A + S-adenosyl-L-homocysteine + 2 H(+). Functionally, catalyzes the methylthiolation of N6-(dimethylallyl)adenosine (i(6)A), leading to the formation of 2-methylthio-N6-(dimethylallyl)adenosine (ms(2)i(6)A) at position 37 in tRNAs that read codons beginning with uridine. This Xanthomonas oryzae pv. oryzae (strain MAFF 311018) protein is tRNA-2-methylthio-N(6)-dimethylallyladenosine synthase.